The following is a 414-amino-acid chain: Esterase FrsA (414 aa).

It belongs to the FrsA family.

The catalysed reaction is a carboxylic ester + H2O = an alcohol + a carboxylate + H(+). Catalyzes the hydrolysis of esters. The polypeptide is Esterase FrsA (Salmonella agona (strain SL483)).